A 144-amino-acid chain; its full sequence is Large ribosomal subunit protein uL15 (144 aa).

A disordered region spans residues methionine 1–leucine 57. Residues arginine 21–cysteine 31 show a composition bias toward gly residues.

This sequence belongs to the universal ribosomal protein uL15 family. In terms of assembly, part of the 50S ribosomal subunit.

Functionally, binds to the 23S rRNA. The sequence is that of Large ribosomal subunit protein uL15 from Photobacterium profundum (strain SS9).